Consider the following 405-residue polypeptide: Indoleamine 2,3-dioxygenase acdA (405 aa).

His312 is a heme binding site.

The protein belongs to the indoleamine 2,3-dioxygenase family. The cofactor is heme.

The catalysed reaction is L-tryptophan + O2 = N-formyl-L-kynurenine. It functions in the pathway secondary metabolite biosynthesis. Functionally, indoleamine 2,3-dioxygenase; part of the gene cluster that mediates the biosynthesis of aspcandine, a pyrrolobenzazepine alkaloid. Initially, the indoleamine 2,3-dioxygenase acdA accepts L-tryptophan and performs the oxidative opening of the indole ring to yield N'-formyl-L-kynurenine, which undergoes the spontaneous deformylation reaction to provide L-kynurenine. The kynurenine 3-monooxygenase acdD then hydroxylates L-kynurenine to afford 3-hydroxy-L-kynurenine. 3-hydroxy-L-kynurenine is activated by the A domain of the NRPS-PKS acdB and subsequently loaded onto the enzyme. The KS domain conducts the decarboxylative condensation of the 3-hydroxy-L-kynurenyl and malonyl moieties, and subsequent nucleophilic attacks by the two amino groups would occur nonenzymatically at two distinct positions, achieving the chain release and the construction of the tricyclic system. Finally, a dehydration reaction completes the biosynthesis to yield aspcandine. The sequence is that of Indoleamine 2,3-dioxygenase acdA from Aspergillus candidus.